A 212-amino-acid polypeptide reads, in one-letter code: 3,4-dihydroxy-2-butanone 4-phosphate synthase (212 aa).

Residues 37-38 (RE), D42, 150-154 (RRGHT), and E174 contribute to the D-ribulose 5-phosphate site. Residue E38 coordinates Mg(2+). Residue H153 coordinates Mg(2+).

It belongs to the DHBP synthase family. As to quaternary structure, homodimer. Mg(2+) is required as a cofactor. The cofactor is Mn(2+).

The enzyme catalyses D-ribulose 5-phosphate = (2S)-2-hydroxy-3-oxobutyl phosphate + formate + H(+). It participates in cofactor biosynthesis; riboflavin biosynthesis; 2-hydroxy-3-oxobutyl phosphate from D-ribulose 5-phosphate: step 1/1. Functionally, catalyzes the conversion of D-ribulose 5-phosphate to formate and 3,4-dihydroxy-2-butanone 4-phosphate. The chain is 3,4-dihydroxy-2-butanone 4-phosphate synthase from Shewanella piezotolerans (strain WP3 / JCM 13877).